The chain runs to 464 residues: GDNF family receptor alpha-2 (464 aa).

An N-terminal signal peptide occupies residues 1–21 (MILANAFCLFFFLDETLRSLA). Intrachain disulfides connect Cys40/Cys93, Cys47/Cys53, Cys63/Cys78, Cys95/Cys105, Cys161/Cys222, Cys168/Cys174, Cys185/Cys200, Cys195/Cys241, Cys224/Cys229, Cys251/Cys323, Cys258/Cys264, Cys275/Cys293, Cys285/Cys347, and Cys325/Cys335. N-linked (GlcNAc...) asparagine glycosylation is present at Asn52. The N-linked (GlcNAc...) asparagine glycan is linked to Asn357. A disordered region spans residues 363 to 392 (MSPKGPTFSATQAPRVEKTPSLPDDLSDST). The span at 381–392 (TPSLPDDLSDST) shows a compositional bias: low complexity. Asn413 is a glycosylation site (N-linked (GlcNAc...) asparagine). Residue Ser443 is the site of GPI-anchor amidated serine attachment. A propeptide spans 444–464 (CRARLSTALTALPLLMVTLAQ) (removed in mature form).

This sequence belongs to the GDNFR family. Interacts with NRTN ligand and RET: forms a 2:2:2 ternary complex composed of NRTN ligand, GFRA2 and RET receptor. Also forms a 4:4:4 tetrameric complex composed of 4 copies of NRTN ligand, GFRA2 and RET receptor, which prevents endocytosis of RET. Interacts with SORL1. In terms of tissue distribution, neurons of the superior cervical and dorsal root ganglia, and adult brain and testis. Low level in the substantia nigra, spleen and adrenal gland. Isoform 1, isoform 2 and isoform 3 are all expressed in brain, liver, ileum, spleen, heart and kidney. In brain, isoform 1 is most abundant, isoform 2 slightly less and isoform 3 is lowest. No significant levels of isoform 1, isoform 2 or isoform 3 expression in testis.

It is found in the cell membrane. In terms of biological role, receptor for neurturin (NRTN), a growth factor that supports the survival of sympathetic neurons. NRTN-binding leads to autophosphorylation and activation of the RET receptor. Also able to mediate GDNF signaling through the RET tyrosine kinase receptor. Functionally, participates in NRTN-induced 'Ser-727' phosphorylation of STAT3. The chain is GDNF family receptor alpha-2 from Mus musculus (Mouse).